The following is a 255-amino-acid chain: NAD-dependent protein deacylase (255 aa).

The 252-residue stretch at 1-252 (MPKLVVFSGA…AEIEQELEQF (252 aa)) folds into the Deacetylase sirtuin-type domain. An NAD(+)-binding site is contributed by 9 to 28 (GAGLSAESGLETFRDNGGLW). Substrate is bound by residues Tyr-53 and Arg-56. 103–106 (QNVD) is an NAD(+) binding site. The active-site Proton acceptor is the His-121. The Zn(2+) site is built by Cys-129, Cys-132, Cys-148, and Cys-151. NAD(+) is bound by residues 190–192 (GTS), 218–220 (NLQ), and Thr-238.

Belongs to the sirtuin family. Class III subfamily. Requires Zn(2+) as cofactor.

The protein localises to the cytoplasm. The enzyme catalyses N(6)-acetyl-L-lysyl-[protein] + NAD(+) + H2O = 2''-O-acetyl-ADP-D-ribose + nicotinamide + L-lysyl-[protein]. It carries out the reaction N(6)-succinyl-L-lysyl-[protein] + NAD(+) + H2O = 2''-O-succinyl-ADP-D-ribose + nicotinamide + L-lysyl-[protein]. Functionally, NAD-dependent lysine deacetylase and desuccinylase that specifically removes acetyl and succinyl groups on target proteins. Modulates the activities of several proteins which are inactive in their acylated form. This Helicobacter hepaticus (strain ATCC 51449 / 3B1) protein is NAD-dependent protein deacylase.